Here is a 206-residue protein sequence, read N- to C-terminus: Small ribosomal subunit protein uS4 (206 aa).

An S4 RNA-binding domain is found at 96 to 156 (SRLDNVVYRM…EKSKNQLRIQ (61 aa)).

The protein belongs to the universal ribosomal protein uS4 family. In terms of assembly, part of the 30S ribosomal subunit. Contacts protein S5. The interaction surface between S4 and S5 is involved in control of translational fidelity.

Functionally, one of the primary rRNA binding proteins, it binds directly to 16S rRNA where it nucleates assembly of the body of the 30S subunit. With S5 and S12 plays an important role in translational accuracy. The sequence is that of Small ribosomal subunit protein uS4 from Teredinibacter turnerae (strain ATCC 39867 / T7901).